A 60-amino-acid chain; its full sequence is Toxin FS-2 (60 aa).

4 disulfide bridges follow: Cys-3/Cys-22, Cys-17/Cys-39, Cys-41/Cys-52, and Cys-53/Cys-58. Residues Cys-41–Tyr-48 are important for binding to L-type calcium channels.

This sequence belongs to the three-finger toxin family. Short-chain subfamily. L-type calcium blocker sub-subfamily. Expressed by the venom gland.

Its subcellular location is the secreted. Specific blocker of the voltage-dependent L-type calcium channel (Cav1/CACNA1). Inhibits cardiac contractions. This chain is Toxin FS-2, found in Dendroaspis polylepis polylepis (Black mamba).